Reading from the N-terminus, the 298-residue chain is GTP cyclohydrolase FolE2 (298 aa).

It belongs to the GTP cyclohydrolase IV family.

It catalyses the reaction GTP + H2O = 7,8-dihydroneopterin 3'-triphosphate + formate + H(+). It participates in cofactor biosynthesis; 7,8-dihydroneopterin triphosphate biosynthesis; 7,8-dihydroneopterin triphosphate from GTP: step 1/1. Functionally, converts GTP to 7,8-dihydroneopterin triphosphate. In Pseudomonas aeruginosa (strain LESB58), this protein is GTP cyclohydrolase FolE2.